A 900-amino-acid polypeptide reads, in one-letter code: Alpha-actinin-3 (900 aa).

M1 is modified (N-acetylmethionine). The interval 1–26 (MMMVMQPEGLGAGEGPFSGGGGGEYM) is disordered. The actin-binding stretch occupies residues 1-260 (MMMVMQPEGL…IMTYVSCFYH (260 aa)). The segment covering 10 to 24 (LGAGEGPFSGGGGGE) has biased composition (gly residues). 2 consecutive Calponin-homology (CH) domains span residues 44 to 148 (KQQR…LRFA) and 157 to 263 (TSAK…HAFA). Spectrin repeat units lie at residues 287–397 (KLME…WLLS), 407–512 (HLAE…ALER), 522–633 (QLQL…TLQE), and 643–746 (RLRR…EVEN). 2 consecutive EF-hand domains span residues 759 to 794 (EQLN…MGYD) and 795 to 830 (LGEV…ETAE). Ca(2+)-binding residues include D772, N776, M778, D783, D808, and N810.

The protein belongs to the alpha-actinin family. As to quaternary structure, homodimer; antiparallel. Also forms heterodimers with ACTN2. Interacts with MYOZ1. As to expression, expression restricted to skeletal muscle fast (type 2) fibers (at protein level).

F-actin cross-linking protein which is thought to anchor actin to a variety of intracellular structures. This is a bundling protein. The polypeptide is Alpha-actinin-3 (Actn3) (Mus musculus (Mouse)).